Consider the following 437-residue polypeptide: Elongation factor 1-gamma (437 aa).

An N-acetylalanine modification is found at A2. In terms of domain architecture, GST N-terminal spans 2–87 (AAGTLYTYPE…YVSNEELRGS (86 aa)). The GST C-terminal domain maps to 88-216 (TPEAAAQVVQ…VKLCEKMAQF (129 aa)). Residues K147 and K212 each carry the N6-acetyllysine modification. Over residues 221 to 254 (FAETQPKKDTPRKEKGSREEKQKPQAERKEEKKA) the composition is skewed to basic and acidic residues. The segment at 221–268 (FAETQPKKDTPRKEKGSREEKQKPQAERKEEKKAAAPAPEEEMDECEQ) is disordered. A Glycyl lysine isopeptide (Lys-Gly) (interchain with G-Cter in SUMO1) cross-link involves residue K253. One can recognise an EF-1-gamma C-terminal domain in the interval 276 to 437 (AKDPFAHLPK…KAFNQGKIFK (162 aa)). K285 participates in a covalent cross-link: Glycyl lysine isopeptide (Lys-Gly) (interchain with G-Cter in SUMO2). Residue K401 is modified to N6-acetyllysine. K434 bears the N6-acetyllysine; alternate mark. K434 carries the N6-malonyllysine; alternate modification.

As to quaternary structure, EF-1 is composed of four subunits: alpha, beta, delta, and gamma. As to expression, highly expressed in pancreatic tumor tissue and to a lesser extent in normal kidney, intestine, pancreas, stomach, lung, brain, spleen and liver.

In terms of biological role, probably plays a role in anchoring the complex to other cellular components. This chain is Elongation factor 1-gamma (EEF1G), found in Homo sapiens (Human).